A 366-amino-acid chain; its full sequence is Putative transcription factor PHD1 (366 aa).

Residues 186–292 (RVITTMWEDE…KDIESIVDAR (107 aa)) form the HTH APSES-type domain. The H-T-H motif DNA-binding region spans 220 to 241 (GTKLLNVTKMTRGRRDGILRSE). The disordered stretch occupies residues 294–366 (PSNKASLTPK…QTSRAKNELS (73 aa)). Residues 312–328 (EPSDNKHEIATEIKPKS) are compositionally biased toward basic and acidic residues.

This sequence belongs to the EFG1/PHD1/stuA family.

It localises to the nucleus. Its function is as follows. Putative transcription factor that functions in pseudohyphal growth. This is Putative transcription factor PHD1 (PHD1) from Saccharomyces cerevisiae (strain ATCC 204508 / S288c) (Baker's yeast).